Consider the following 199-residue polypeptide: Protein Thf1 (199 aa).

The stretch at 167-198 forms a coiled coil; that stretch reads QYSRVEKDISMYKSNIEKMKQALEIIALNLKT.

This sequence belongs to the THF1 family.

In terms of biological role, may be involved in photosynthetic membrane biogenesis. The chain is Protein Thf1 from Prochlorococcus marinus (strain NATL1A).